A 437-amino-acid polypeptide reads, in one-letter code: F-box only protein 9 (437 aa).

Positions 1-29 (MAEAEEDCHSEAVREGDDDDENESPAETD) are disordered. Residues 16–26 (GDDDDENESPA) show a composition bias toward acidic residues. A TPR repeat occupies 84 to 117 (ARELFLKAVEEEQNGALYEAIKFYRRAMQLVPDI). S126 is subject to Phosphoserine. Residues 175 to 226 (QTHISALPMEVLMYVFRWVVSSDLDLRSLEQLSQVCRGFYICARDPEIWRLA) enclose the F-box domain.

In terms of assembly, part of the SCF (SKP1-CUL1-F-box) E3 ubiquitin-protein ligase complex SCF(FBXO9) composed of CUL1, SKP1, RBX1 and FBXO9. Interacts with TTI1 and TELO2; when TTI1 and TELO2 are phosphorylated by CK2.

Its subcellular location is the cytoplasm. It functions in the pathway protein modification; protein ubiquitination. Substrate recognition component of a SCF (SKP1-CUL1-F-box protein) E3 ubiquitin-protein ligase complex which mediates the ubiquitination and subsequent proteasomal degradation of target proteins and plays a role in several biological processes such as cell cycle, cell proliferation, or maintenance of chromosome stability. Ubiquitinates mTORC1-bound TTI1 and TELO2 when they are phosphorylated by CK2 following growth factor deprivation, leading to their degradation. In contrast, does not mediate ubiquitination of TTI1 and TELO2 when they are part of the mTORC2 complex. As a consequence, mTORC1 is inactivated to restrain cell growth and protein translation, while mTORC2 is the activated due to the relief of feedback inhibition by mTORC1. Plays a role in maintaining epithelial cell survival by regulating the turn-over of chromatin modulator PRMT4 through ubiquitination and degradation by the proteasomal pathway. Also regulates PPARgamma stability by facilitating PPARgamma/PPARG ubiquitination and thereby plays a role in adipocyte differentiation. The protein is F-box only protein 9 (FBXO9) of Bos taurus (Bovine).